The following is a 115-amino-acid chain: Large ribosomal subunit protein bL20 (115 aa).

This sequence belongs to the bacterial ribosomal protein bL20 family.

Functionally, binds directly to 23S ribosomal RNA and is necessary for the in vitro assembly process of the 50S ribosomal subunit. It is not involved in the protein synthesizing functions of that subunit. This Malacoplasma penetrans (strain HF-2) (Mycoplasma penetrans) protein is Large ribosomal subunit protein bL20.